Consider the following 283-residue polypeptide: Putative sugar uptake protein BC_0219 (283 aa).

Transmembrane regions (helical) follow at residues 4 to 21 (LLAL…LVSV), 26 to 48 (GAYS…MYVF), 52 to 71 (ALTM…WALG), 84 to 106 (VSTT…GVIA), 110 to 132 (WTTT…GVVF), 151 to 173 (LLTL…WYNI), 178 to 195 (AILP…VLTS), 208 to 230 (ALSG…RVGV), 234 to 253 (FPLS…VFLG), and 260 to 279 (QLIF…VLLG).

The protein belongs to the GRP transporter (TC 2.A.7.5) family.

The protein localises to the cell membrane. The protein is Putative sugar uptake protein BC_0219 of Bacillus cereus (strain ATCC 14579 / DSM 31 / CCUG 7414 / JCM 2152 / NBRC 15305 / NCIMB 9373 / NCTC 2599 / NRRL B-3711).